A 145-amino-acid polypeptide reads, in one-letter code: UPF0179 protein MmarC6_0993 (145 aa).

The protein belongs to the UPF0179 family.

The chain is UPF0179 protein MmarC6_0993 from Methanococcus maripaludis (strain C6 / ATCC BAA-1332).